The primary structure comprises 152 residues: uncharacterized protein (152 aa).

This is an uncharacterized protein from Homo sapiens (Human).